Consider the following 590-residue polypeptide: CTP synthase (590 aa).

Positions 1-281 are amidoligase domain; sequence MPALRKHPQT…DAYVVRRLNL (281 aa). Residue S23 participates in CTP binding. Residue S23 participates in UTP binding. ATP-binding positions include 24 to 29 and D81; that span reads SLGKGL. Mg(2+) is bound by residues D81 and E155. Residues 162–164, 202–207, and K238 contribute to the CTP site; these read DIE and KTKPTQ. Residues 202-207 and K238 each bind UTP; that span reads KTKPTQ. The Glutamine amidotransferase type-1 domain occupies 306-554; sequence RIALVGKYID…IGAAIDYKAA (249 aa). An L-glutamine-binding site is contributed by G369. Catalysis depends on C396, which acts as the Nucleophile; for glutamine hydrolysis. Residues 397–400, E419, and R480 contribute to the L-glutamine site; that span reads LGLQ. Residues H527 and E529 contribute to the active site.

This sequence belongs to the CTP synthase family. As to quaternary structure, homotetramer.

It carries out the reaction UTP + L-glutamine + ATP + H2O = CTP + L-glutamate + ADP + phosphate + 2 H(+). The enzyme catalyses L-glutamine + H2O = L-glutamate + NH4(+). It catalyses the reaction UTP + NH4(+) + ATP = CTP + ADP + phosphate + 2 H(+). Its pathway is pyrimidine metabolism; CTP biosynthesis via de novo pathway; CTP from UDP: step 2/2. Its activity is regulated as follows. Allosterically activated by GTP, when glutamine is the substrate; GTP has no effect on the reaction when ammonia is the substrate. The allosteric effector GTP functions by stabilizing the protein conformation that binds the tetrahedral intermediate(s) formed during glutamine hydrolysis. Inhibited by the product CTP, via allosteric rather than competitive inhibition. In terms of biological role, catalyzes the ATP-dependent amination of UTP to CTP with either L-glutamine or ammonia as the source of nitrogen. Regulates intracellular CTP levels through interactions with the four ribonucleotide triphosphates. This is CTP synthase from Mycolicibacterium smegmatis (strain ATCC 700084 / mc(2)155) (Mycobacterium smegmatis).